Consider the following 292-residue polypeptide: Probable starch degradation products transport system permease protein AmyD (292 aa).

6 helical membrane passes run 15–35, 77–97, 110–130, 156–176, 205–225, and 260–280; these read WLFI…PFII, FAVA…MLVT, FYLP…FIFV, FWGL…VIYI, VFPL…SNSF, and MAVG…ISVI. In terms of domain architecture, ABC transmembrane type-1 spans 71 to 281; the sequence is IIFTAKFAVA…LIIAVISVIQ (211 aa).

It belongs to the binding-protein-dependent transport system permease family. MalFG subfamily.

The protein localises to the cell membrane. Its function is as follows. Probably part of a binding-protein-dependent transport system starch degradation products. Probably responsible for the translocation of the substrate across the membrane. This is Probable starch degradation products transport system permease protein AmyD (amyD) from Thermoanaerobacterium thermosulfurigenes (Clostridium thermosulfurogenes).